Consider the following 522-residue polypeptide: BTB/POZ domain-containing protein 3 (522 aa).

A BTB domain is found at 120–190 (ADVHFVVGPP…IYCDEIDLAA (71 aa)). A BACK domain is found at 235–300 (FEEPDLTQRC…NWAEVECQRQ (66 aa)).

In terms of tissue distribution, strongly expressed in the primary visual cortex.

The protein localises to the cytoplasm. It is found in the cytosol. It localises to the nucleus. Functionally, acts as a key regulator of dendritic field orientation during development of sensory cortex. Also directs dendrites toward active axon terminals when ectopically expressed. The sequence is that of BTB/POZ domain-containing protein 3 (BTBD3) from Callithrix jacchus (White-tufted-ear marmoset).